The sequence spans 314 residues: 4-diphosphocytidyl-2-C-methyl-D-erythritol kinase (314 aa).

Lys11 is an active-site residue. 99–109 (PMAAGLAGGST) is an ATP binding site. Asp141 is a catalytic residue.

Belongs to the GHMP kinase family. IspE subfamily.

The catalysed reaction is 4-CDP-2-C-methyl-D-erythritol + ATP = 4-CDP-2-C-methyl-D-erythritol 2-phosphate + ADP + H(+). It functions in the pathway isoprenoid biosynthesis; isopentenyl diphosphate biosynthesis via DXP pathway; isopentenyl diphosphate from 1-deoxy-D-xylulose 5-phosphate: step 3/6. In terms of biological role, catalyzes the phosphorylation of the position 2 hydroxy group of 4-diphosphocytidyl-2C-methyl-D-erythritol. This is 4-diphosphocytidyl-2-C-methyl-D-erythritol kinase from Trichodesmium erythraeum (strain IMS101).